We begin with the raw amino-acid sequence, 541 residues long: Putative ammonium transporter sll0537 (541 aa).

The next 11 membrane-spanning stretches (helical) occupy residues 6–26 (TLWLLLCAGLVFFMQAGFMCL), 44–64 (FADFGISVALFWSFGFSIMFG), 86–106 (LAVFFLFQAMFCGTATTIISG), 117–137 (YLLVAGLASGLIYPLFGDWAW), 161–181 (FAGSTVVHSVGAWIGLATILV), 203–223 (MPFSVLGTLILWFGWLGFNGG), 235–255 (IMVNTVLAGVGGMLMAGLISL), 260–280 (MIQVEPLMNGSLAGLVAITAS), 283–303 (VVMTPIAMVIGATGSAIAYLV), 316–336 (VDAVAVHGGAGVWGTLCVGLF), and 356–376 (LLGIGVCTLWAFGLAWVFLTL).

This sequence belongs to the ammonia transporter channel (TC 1.A.11.2) family.

The protein resides in the cell membrane. The sequence is that of Putative ammonium transporter sll0537 from Synechocystis sp. (strain ATCC 27184 / PCC 6803 / Kazusa).